A 414-amino-acid polypeptide reads, in one-letter code: Glutamyl-tRNA reductase (414 aa).

Substrate is bound by residues 49-52 (TCNR), serine 108, 113-115 (EPQ), and glutamine 119. Cysteine 50 functions as the Nucleophile in the catalytic mechanism. Residue 188 to 193 (GAGQTG) coordinates NADP(+).

Belongs to the glutamyl-tRNA reductase family. Homodimer.

It carries out the reaction (S)-4-amino-5-oxopentanoate + tRNA(Glu) + NADP(+) = L-glutamyl-tRNA(Glu) + NADPH + H(+). It functions in the pathway porphyrin-containing compound metabolism; protoporphyrin-IX biosynthesis; 5-aminolevulinate from L-glutamyl-tRNA(Glu): step 1/2. Functionally, catalyzes the NADPH-dependent reduction of glutamyl-tRNA(Glu) to glutamate 1-semialdehyde (GSA). This is Glutamyl-tRNA reductase from Francisella philomiragia subsp. philomiragia (strain ATCC 25017 / CCUG 19701 / FSC 153 / O#319-036).